The sequence spans 184 residues: MSWRSEHIWIELIAGSRKISNFCWAIILFLGSLGFLLIGISSYLDRNLISLFPSQQIIFFPQGLVMSFYGLAGLFISSYLWCTISWNVGSGYDRFDRKEGIVCIFRWGFPGKNRRILLRLFMKDIQSIRIEVKEGFYARRVLYMEIRGQGAIPLTRTDENLTPREIEQKAAELAYFLRVPIEVF.

2 helical membrane passes run 22 to 42 and 57 to 77; these read FCWA…GISS and IIFF…LFIS.

This sequence belongs to the Ycf4 family.

The protein resides in the plastid. It localises to the chloroplast thylakoid membrane. Its function is as follows. Seems to be required for the assembly of the photosystem I complex. The sequence is that of Photosystem I assembly protein Ycf4 from Populus alba (White poplar).